Consider the following 305-residue polypeptide: Superoxide dismutase [Fe] 2, chloroplastic (305 aa).

Residues 1–46 (MMNVAVTATPSSLLYSPLLLPSQGPNRRMQWKRNGKRRLGTKVAVS) constitute a chloroplast transit peptide. The Fe cation site is built by His-77, His-129, Asp-228, and His-232. The segment at 270 to 305 (AVQREQEGTETEDEENPDDEVPEVYLDSDIDVSEVD) is disordered. Residues 277–305 (GTETEDEENPDDEVPEVYLDSDIDVSEVD) are compositionally biased toward acidic residues.

It belongs to the iron/manganese superoxide dismutase family. As to quaternary structure, heterodimer with FSD3. Interacts with MRL7 and PRDA1. Requires Fe cation as cofactor.

Its subcellular location is the plastid. It localises to the chloroplast thylakoid. The catalysed reaction is 2 superoxide + 2 H(+) = H2O2 + O2. With respect to regulation, activated by cpn20/cpn21 (in vitro). In terms of biological role, destroys superoxide anion radicals which are normally produced within the cells and which are toxic to biological systems. Plays important role in chloroplast development, particularly in the maintenance of thylakoids membranes. Seems to act as a heterodimer with FSD3. This chain is Superoxide dismutase [Fe] 2, chloroplastic (FSD2), found in Arabidopsis thaliana (Mouse-ear cress).